Reading from the N-terminus, the 186-residue chain is Elongation factor P (186 aa).

Belongs to the elongation factor P family.

Its subcellular location is the cytoplasm. It functions in the pathway protein biosynthesis; polypeptide chain elongation. Involved in peptide bond synthesis. Stimulates efficient translation and peptide-bond synthesis on native or reconstituted 70S ribosomes in vitro. Probably functions indirectly by altering the affinity of the ribosome for aminoacyl-tRNA, thus increasing their reactivity as acceptors for peptidyl transferase. This chain is Elongation factor P, found in Maridesulfovibrio salexigens (strain ATCC 14822 / DSM 2638 / NCIMB 8403 / VKM B-1763) (Desulfovibrio salexigens).